A 776-amino-acid chain; its full sequence is Microtubule-associated protein tau (776 aa).

The span at 1–26 (MAEPRQEFEVMEDHAGTYGLGDRKDQ) shows a compositional bias: basic and acidic residues. Disordered stretches follow at residues 1–263 (MAEP…PAKG) and 276–591 (STEI…LKNV). Alanine 2 carries the N-acetylalanine modification. 2 positions are modified to phosphotyrosine: tyrosine 18 and tyrosine 29. Lysine 44 participates in a covalent cross-link: Glycyl lysine isopeptide (Lys-Gly) (interchain with G-Cter in ubiquitin). Residues serine 46 and serine 61 each carry the phosphoserine modification. Over residues 61 to 71 (SETSDAKSTPT) the composition is skewed to polar residues. Phosphothreonine occurs at positions 69, 71, and 111. Basic and acidic residues-rich tracts occupy residues 179 to 189 (EGGRHAPELLK) and 207 to 216 (GGKERPGSKE). Serine 214 is subject to Phosphoserine. The span at 217–228 (EVDEDRDVDESS) shows a compositional bias: acidic residues. Over residues 314–323 (EQAHSEEHLG) the composition is skewed to basic and acidic residues. The segment covering 324–340 (RAAFPGAPGEGPEARGP) has biased composition (low complexity). Basic and acidic residues-rich tracts occupy residues 344 to 356 (EDTK…ESSE) and 381 to 393 (KSKD…DKKA). The segment covering 440–452 (KYVSSVTPRTGSS) has biased composition (polar residues). Positions 455 to 466 (KEMKLKGADGKT) are enriched in basic and acidic residues. A Phosphothreonine modification is found at threonine 470. At arginine 472 the chain carries Omega-N-methylarginine. Lysine 480 is modified (N6,N6-dimethyllysine; alternate). Position 480 is an N6-acetyllysine; alternate (lysine 480). Phosphothreonine is present on residues threonine 486, threonine 492, and threonine 498. A phosphoserine mark is found at serine 502, serine 526, and serine 530. The segment covering 517–528 (RSERGEPPKSGD) has biased composition (basic and acidic residues). A compositionally biased stretch (low complexity) spans 529–549 (RSGYSSPGSPGTPGSRSRTPS). Tyrosine 532 is subject to Phosphotyrosine. 3 positions are modified to phosphoserine: serine 533, serine 534, and serine 537. 2 positions are modified to phosphothreonine: threonine 540 and threonine 547. Serine 549 is subject to Phosphoserine. The residue at position 552 (threonine 552) is a Phosphothreonine. Position 560 is an N6-acetyllysine (lysine 560). Threonine 566 carries the post-translational modification Phosphothreonine. Phosphoserine occurs at positions 570 and 572. 4 Tau/MAP repeats span residues 579 to 609 (QTAP…GGGK), 610 to 640 (VQII…GGGS), 641 to 671 (VQIV…GGGQ), and 672 to 703 (VEVK…GGGN). A Glycyl lysine isopeptide (Lys-Gly) (interchain with G-Cter in ubiquitin) cross-link involves residue lysine 589. Lysine 594 is modified (N6-acetyllysine; alternate). Lysine 594 is subject to N6-methyllysine; alternate. Lysine 594 is covalently cross-linked (Glycyl lysine isopeptide (Lys-Gly) (interchain with G-Cter in ubiquitin); alternate). The residue at position 597 (serine 597) is a Phosphoserine. Lysine 602 participates in a covalent cross-link: Glycyl lysine isopeptide (Lys-Gly) (interchain with G-Cter in ubiquitin). Lysine 616 is modified (N6-acetyllysine; alternate). Residue lysine 616 forms a Glycyl lysine isopeptide (Lys-Gly) (interchain with G-Cter in ubiquitin); alternate linkage. Phosphoserine is present on residues serine 620 and serine 624. Position 625 is an N6-acetyllysine (lysine 625). Position 628 is a phosphoserine (serine 628). Lysine 633 is modified (N6-acetyllysine; alternate). Residue lysine 633 forms a Glycyl lysine isopeptide (Lys-Gly) (interchain with G-Cter in ubiquitin); alternate linkage. At serine 640 the chain carries Phosphoserine. Lysine 646 carries the post-translational modification N6,N6-dimethyllysine; alternate. 3 positions are modified to N6-acetyllysine; alternate: lysine 646, lysine 652, and lysine 656. Glycyl lysine isopeptide (Lys-Gly) (interchain with G-Cter in ubiquitin); alternate cross-links involve residues lysine 646, lysine 652, and lysine 656. The residue at position 659 (serine 659) is a Phosphoserine. N6-acetyllysine; alternate is present on residues lysine 666, lysine 678, and lysine 682. Residues lysine 666, lysine 678, and lysine 682 each participate in a glycyl lysine isopeptide (Lys-Gly) (interchain with G-Cter in ubiquitin); alternate cross-link. The residue at position 684 (arginine 684) is an Omega-N-methylarginine. Serine 687 is modified (phosphoserine). Residue lysine 688 forms a Glycyl lysine isopeptide (Lys-Gly) (interchain with G-Cter in ubiquitin) linkage. Residue serine 691 is modified to Phosphoserine. N6-acetyllysine; alternate is present on lysine 704. A Glycyl lysine isopeptide (Lys-Gly) (interchain with G-Cter in ubiquitin); alternate cross-link involves residue lysine 704. Lysine 710 is covalently cross-linked (Glycyl lysine isopeptide (Lys-Gly) (interchain with G-Cter in ubiquitin)). N6-acetyllysine; alternate is present on lysine 720. Lysine 720 is covalently cross-linked (Glycyl lysine isopeptide (Lys-Gly) (interchain with G-Cter in ubiquitin); alternate). Tyrosine 729 carries the phosphotyrosine modification. Phosphoserine is present on residues serine 731 and serine 735. The segment at 733–752 (VVSGDTSPRHLSNVSSTGSI) is disordered. Positions 736–751 (GDTSPRHLSNVSSTGS) are enriched in polar residues. Threonine 738 is subject to Phosphothreonine. 4 positions are modified to phosphoserine: serine 739, serine 744, serine 751, and serine 757. Threonine 762 is subject to Phosphothreonine.

In terms of assembly, interacts with MARK1, MARK2, MARK3 and MARK4. Interacts with SQSTM1 when polyubiquitinated. Interacts with PSMC2 through SQSTM1. Interacts with FKBP4. Binds to CSNK1D. Interacts with SGK1. Interacts with EPM2A; the interaction dephosphorylates MAPT at Ser-396. Interacts with PIN1. Interacts with LRRK2. Interacts with LRP1, leading to endocytosis; this interaction is reduced in the presence of LRPAP1/RAP. Polyubiquitinated. Requires functional TRAF6 and may provoke SQSTM1-dependent degradation by the proteasome. Post-translationally, phosphorylation at various serine and threonine residues in S-P or T-P motifs by proline-directed protein kinases (PDPK1, CDK1, CDK5, GSK3, MAPK) (a few sites per protein in interphase, more in mitosis), and at serine residues in K-X-G-S motifs by MAP/microtubule affinity-regulating kinase (MARK1, MARK2, MARK3 or MARK4), causing detachment from microtubules, and their disassembly. Phosphorylation at Ser-597 by BRSK1 and BRSK2 in neurons affects ability to bind microtubules and plays a role in neuron polarization. Phosphorylation at Ser-214 by SGK1 mediates microtubule depolymerization and neurite formation in hippocampal neurons. Phosphorylated by PHK. Dephosphorylation at several serine and threonine residues by the serine/threonine phosphatase PPP5C.

It localises to the cytoplasm. The protein localises to the cytosol. It is found in the cell membrane. Its subcellular location is the cytoskeleton. The protein resides in the cell projection. It localises to the axon. The protein localises to the dendrite. In terms of biological role, promotes microtubule assembly and stability, and might be involved in the establishment and maintenance of neuronal polarity. The C-terminus binds axonal microtubules while the N-terminus binds neural plasma membrane components, suggesting that tau functions as a linker protein between both. Axonal polarity is predetermined by tau localization (in the neuronal cell) in the domain of the cell body defined by the centrosome. The short isoforms allow plasticity of the cytoskeleton whereas the longer isoforms may preferentially play a role in its stabilization. The sequence is that of Microtubule-associated protein tau (MAPT) from Gorilla gorilla gorilla (Western lowland gorilla).